An 88-amino-acid chain; its full sequence is Small ribosomal subunit protein bS20 (88 aa).

Residues 1–27 (MANTPQAKKRARQNEKARKHNASMRSM) are disordered. A compositionally biased stretch (basic residues) spans 7–22 (AKKRARQNEKARKHNA).

The protein belongs to the bacterial ribosomal protein bS20 family.

In terms of biological role, binds directly to 16S ribosomal RNA. In Cellvibrio japonicus (strain Ueda107) (Pseudomonas fluorescens subsp. cellulosa), this protein is Small ribosomal subunit protein bS20.